Consider the following 364-residue polypeptide: Ribosomal RNA large subunit methyltransferase F (364 aa).

The segment covering 1-17 (MPKPAIKTAAKPATSSA) has biased composition (low complexity). The interval 1 to 53 (MPKPAIKTAAKPATSSAGKRGKPITPKSVAKPQAAKPKTVSKPKVKPGEKKRL) is disordered. A compositionally biased stretch (basic residues) spans 39–53 (TVSKPKVKPGEKKRL).

Belongs to the methyltransferase superfamily. METTL16/RlmF family.

It is found in the cytoplasm. The enzyme catalyses adenosine(1618) in 23S rRNA + S-adenosyl-L-methionine = N(6)-methyladenosine(1618) in 23S rRNA + S-adenosyl-L-homocysteine + H(+). Specifically methylates the adenine in position 1618 of 23S rRNA. In Shewanella sp. (strain MR-4), this protein is Ribosomal RNA large subunit methyltransferase F.